We begin with the raw amino-acid sequence, 214 residues long: Small ribosomal subunit protein uS2 (214 aa).

Belongs to the universal ribosomal protein uS2 family.

This Methanococcoides burtonii (strain DSM 6242 / NBRC 107633 / OCM 468 / ACE-M) protein is Small ribosomal subunit protein uS2.